The following is a 246-amino-acid chain: tRNA pseudouridine synthase A (246 aa).

Aspartate 53 acts as the Nucleophile in catalysis. Tyrosine 112 contributes to the substrate binding site.

Belongs to the tRNA pseudouridine synthase TruA family. As to quaternary structure, homodimer.

The enzyme catalyses uridine(38/39/40) in tRNA = pseudouridine(38/39/40) in tRNA. Formation of pseudouridine at positions 38, 39 and 40 in the anticodon stem and loop of transfer RNAs. This is tRNA pseudouridine synthase A from Anaplasma phagocytophilum (strain HZ).